The following is a 199-amino-acid chain: Probable adenylyl-sulfate kinase (199 aa).

Residue 34 to 41 participates in ATP binding; the sequence is GLSGSGKS. Residue S108 is the Phosphoserine intermediate of the active site.

This sequence belongs to the APS kinase family.

The enzyme catalyses adenosine 5'-phosphosulfate + ATP = 3'-phosphoadenylyl sulfate + ADP + H(+). The protein operates within sulfur metabolism; hydrogen sulfide biosynthesis; sulfite from sulfate: step 2/3. In terms of biological role, catalyzes the synthesis of activated sulfate. This chain is Probable adenylyl-sulfate kinase (yisZ), found in Bacillus subtilis (strain 168).